The sequence spans 52 residues: Gastrin/cholecystokinin-like peptide (52 aa).

This sequence belongs to the gastrin/cholecystokinin family.

The protein localises to the secreted. Functionally, may control digestion processes. This chain is Gastrin/cholecystokinin-like peptide, found in Trachemys scripta (Red-eared slider turtle).